A 109-amino-acid polypeptide reads, in one-letter code: Nucleoid-associated protein ETA_24730 (109 aa).

It belongs to the YbaB/EbfC family. As to quaternary structure, homodimer.

It is found in the cytoplasm. The protein resides in the nucleoid. Functionally, binds to DNA and alters its conformation. May be involved in regulation of gene expression, nucleoid organization and DNA protection. The sequence is that of Nucleoid-associated protein ETA_24730 from Erwinia tasmaniensis (strain DSM 17950 / CFBP 7177 / CIP 109463 / NCPPB 4357 / Et1/99).